The following is a 421-amino-acid chain: Adenylosuccinate synthetase (421 aa).

GTP is bound by residues 11–17 (GDEGKGK) and 39–41 (GHT). Asp12 acts as the Proton acceptor in catalysis. Mg(2+) contacts are provided by Asp12 and Gly39. IMP is bound by residues 12-15 (DEGK), 37-40 (NAGH), Thr129, Arg143, Asn219, Thr234, and Arg298. The active-site Proton donor is His40. Residue 294–300 (VTTGRRR) coordinates substrate. GTP contacts are provided by residues Arg300, 326 to 328 (KLD), and 409 to 411 (GTG).

This sequence belongs to the adenylosuccinate synthetase family. In terms of assembly, homodimer. The cofactor is Mg(2+).

The protein resides in the cytoplasm. It catalyses the reaction IMP + L-aspartate + GTP = N(6)-(1,2-dicarboxyethyl)-AMP + GDP + phosphate + 2 H(+). Its pathway is purine metabolism; AMP biosynthesis via de novo pathway; AMP from IMP: step 1/2. Its function is as follows. Plays an important role in the de novo pathway and in the salvage pathway of purine nucleotide biosynthesis. Catalyzes the first committed step in the biosynthesis of AMP from IMP. The polypeptide is Adenylosuccinate synthetase (Paracoccidioides brasiliensis (strain Pb03)).